We begin with the raw amino-acid sequence, 377 residues long: Succinyl-diaminopimelate desuccinylase (377 aa).

His-66 contributes to the Zn(2+) binding site. Residue Asp-68 is part of the active site. Asp-99 contacts Zn(2+). The Proton acceptor role is filled by Glu-133. Residues Glu-134, Glu-162, and His-348 each contribute to the Zn(2+) site.

It belongs to the peptidase M20A family. DapE subfamily. As to quaternary structure, homodimer. Zn(2+) serves as cofactor. Requires Co(2+) as cofactor.

The catalysed reaction is N-succinyl-(2S,6S)-2,6-diaminopimelate + H2O = (2S,6S)-2,6-diaminopimelate + succinate. It functions in the pathway amino-acid biosynthesis; L-lysine biosynthesis via DAP pathway; LL-2,6-diaminopimelate from (S)-tetrahydrodipicolinate (succinylase route): step 3/3. Functionally, catalyzes the hydrolysis of N-succinyl-L,L-diaminopimelic acid (SDAP), forming succinate and LL-2,6-diaminopimelate (DAP), an intermediate involved in the bacterial biosynthesis of lysine and meso-diaminopimelic acid, an essential component of bacterial cell walls. The polypeptide is Succinyl-diaminopimelate desuccinylase (Bordetella avium (strain 197N)).